Reading from the N-terminus, the 510-residue chain is NAD(P)H-quinone oxidoreductase subunit 2, chloroplastic (510 aa).

A run of 12 helical transmembrane segments spans residues 24 to 44 (LLLF…GLIL), 59 to 79 (WFYF…LFRW), 99 to 119 (IFQF…VEYI), 124 to 144 (MAIT…MFLC), 149 to 169 (LITI…LSGY), 184 to 204 (LLMG…LYGL), 229 to 249 (ISIA…PAPF), 295 to 315 (WHLL…LIAI), 323 to 343 (MLAY…IVGD), 347 to 367 (GYAS…GTFA), 395 to 415 (ALSL…AGFF), and 418 to 438 (LHLF…IGLL).

Belongs to the complex I subunit 2 family. NDH is composed of at least 16 different subunits, 5 of which are encoded in the nucleus.

The protein localises to the plastid. It localises to the chloroplast thylakoid membrane. The enzyme catalyses a plastoquinone + NADH + (n+1) H(+)(in) = a plastoquinol + NAD(+) + n H(+)(out). The catalysed reaction is a plastoquinone + NADPH + (n+1) H(+)(in) = a plastoquinol + NADP(+) + n H(+)(out). NDH shuttles electrons from NAD(P)H:plastoquinone, via FMN and iron-sulfur (Fe-S) centers, to quinones in the photosynthetic chain and possibly in a chloroplast respiratory chain. The immediate electron acceptor for the enzyme in this species is believed to be plastoquinone. Couples the redox reaction to proton translocation, and thus conserves the redox energy in a proton gradient. This Muilla maritima (Sea muilla) protein is NAD(P)H-quinone oxidoreductase subunit 2, chloroplastic.